A 156-amino-acid polypeptide reads, in one-letter code: Acyl carrier protein, mitochondrial (156 aa).

The transit peptide at 1-68 (MASRVLCACV…GTVTHLCRQY (68 aa)) directs the protein to the mitochondrion. The 76-residue stretch at 77 to 152 (DGIKDRVLYV…EIVDYIADKK (76 aa)) folds into the Carrier domain. Residue K88 is modified to N6-acetyllysine. O-(pantetheine 4'-phosphoryl)serine is present on S112.

It belongs to the acyl carrier protein (ACP) family. In terms of assembly, mammalian complex I is composed of 45 different subunits. Interacts with ETFRF1. Identified in a complex composed of MALSU1, MIEF1 upstream open reading frame protein and NDUFAB1; within the trimeric complex, MIEF1 upstream open reading frame protein functions as a bridging scaffold that interacts with MALSU1 on one side, and with NDUFAB1 on the other side. The complex interacts with the mitochondrial large ribosomal subunit. Interacts with alpha-1-microglobulin chain; this interaction is required for the maintenance of mitochondrial redox homeostasis. Component of the mitochondrial core iron-sulfur cluster (ISC) complex composed of NFS1, LYRM4, NDUFAB1, ISCU, FXN, and FDX2; this complex is a heterohexamer containing two copies of each monomer. Component of the cyteine desulfurase complex composed of NFS1, LYRM4 and NDUFAB1; this complex contributes to the stability and cysteine desulfurase activity of NFS1. In terms of processing, phosphopantetheinylation at Ser-112 is essential for interactions with LYR motif-containing proteins.

It localises to the mitochondrion. Carrier of the growing fatty acid chain in fatty acid biosynthesis. Accessory and non-catalytic subunit of the mitochondrial membrane respiratory chain NADH dehydrogenase (Complex I), which functions in the transfer of electrons from NADH to the respiratory chain. Accessory protein, of the core iron-sulfur cluster (ISC) assembly complex, that regulates, in association with LYRM4, the stability and the cysteine desulfurase activity of NFS1 and participates in the [2Fe-2S] clusters assembly on the scaffolding protein ISCU. The core iron-sulfur cluster (ISC) assembly complex is involved in the de novo synthesis of a [2Fe-2S] cluster, the first step of the mitochondrial iron-sulfur protein biogenesis. This process is initiated by the cysteine desulfurase complex (NFS1:LYRM4:NDUFAB1) that produces persulfide which is delivered on the scaffold protein ISCU in a FXN-dependent manner. Then this complex is stabilized by FDX2 which provides reducing equivalents to accomplish the [2Fe-2S] cluster assembly. Finally, the [2Fe-2S] cluster is transferred from ISCU to chaperone proteins, including HSCB, HSPA9 and GLRX5. This is Acyl carrier protein, mitochondrial from Mus musculus (Mouse).